Consider the following 176-residue polypeptide: Pituitary adenylate cyclase-activating polypeptide (176 aa).

An N-terminal signal peptide occupies residues 1 to 24 (MTMCSGARLALLVYGIIMHSSVYC). A propeptide spanning residues 25–80 (SPAAAGLRFPGIRPEDEAYDEDGNPLQDFYDSDPPGVGGPASTLRDAYALYYPAEE) is cleaved from the precursor. The segment at 150–158 (VKKYLAAVL) is important for receptor binding. The residue at position 158 (Leu-158) is a Leucine amide. A Lysine amide modification is found at Lys-169. Residues 173–176 (IAYL) constitute a propeptide that is removed on maturation.

Belongs to the glucagon family.

It is found in the secreted. Its function is as follows. PACAP is a neuropeptide involved in diverse array of physiological processes through activating the PACAP subfamily of class B1 G protein-coupled receptors: VIP receptor 1 (VIPR1), VIP receptor 2 (VIPR2), and PACAP type I receptor (ADCYAP1R1). Exerts neuroprotective and general cytoprotective effects due to anti-apoptotic, anti-inflammatory, and antioxidant actions. Promotes neuron projection development through the RAPGEF2/Rap1/B-Raf/ERK pathway. In chromaffin cells, induces long-lasting increase of intracellular calcium concentrations and neuroendocrine secretion. Involved in the control of glucose homeostasis, induces insulin secretion by pancreatic beta cells. PACAP exists in two bioactive forms from proteolysis of the same precursor protein, PACAP27 and PACAP38, which differ by eleven amino acid residues in the C-terminus. In Sus scrofa (Pig), this protein is Pituitary adenylate cyclase-activating polypeptide (ADCYAP1).